Here is a 262-residue protein sequence, read N- to C-terminus: ABSCISIC ACID-INSENSITIVE 5-like protein 3 (262 aa).

A phosphoserine mark is found at S21, S43, and S66. T104 bears the Phosphothreonine mark. One can recognise a bZIP domain in the interval 190-253 (VERRQKRMIK…SEPPPDPKWK (64 aa)). The tract at residues 192–211 (RRQKRMIKNRESAARSRARK) is basic motif. Residues 218 to 232 (LEIKVSRLEEENEKL) form a leucine-zipper region. A compositionally biased stretch (basic and acidic residues) spans 239–252 (EKILPSEPPPDPKW). The tract at residues 239 to 262 (EKILPSEPPPDPKWKLRRTNSASL) is disordered.

Belongs to the bZIP family. ABI5 subfamily. As to quaternary structure, DNA-binding heterodimer with ABI5/DPBF1, DPBF2 or AREB3/DPBF3. Interacts with the AFP proteins AFP2, AFP3 and AFP4. Predominantly expressed in seeds.

Its subcellular location is the nucleus. In terms of biological role, binds to the embryo specification element and the ABA-responsive element (ABRE) of the Dc3 gene promoter and to the ABRE of the Em1 gene promoter. Could participate in abscisic acid-regulated gene expression during seed development. This Arabidopsis thaliana (Mouse-ear cress) protein is ABSCISIC ACID-INSENSITIVE 5-like protein 3 (DPBF4).